Reading from the N-terminus, the 311-residue chain is Beta-lactamase (311 aa).

The tat-type signal signal peptide spans methionine 1–alanine 34. The Acyl-ester intermediate role is filled by serine 87. Lysine 255–glycine 257 contributes to the substrate binding site.

This sequence belongs to the class-A beta-lactamase family. In terms of processing, predicted to be exported by the Tat system. The position of the signal peptide cleavage has not been experimentally proven.

It catalyses the reaction a beta-lactam + H2O = a substituted beta-amino acid. The protein is Beta-lactamase (bla) of Kitasatospora aureofaciens (Streptomyces aureofaciens).